Consider the following 433-residue polypeptide: Phosphomethylpyrimidine synthase (433 aa).

Residues Asn66, Met94, Tyr123, His162, 184–186, 225–228, and Glu264 contribute to the substrate site; these read SRG and DALR. His268 contributes to the Zn(2+) binding site. Tyr291 contacts substrate. His332 provides a ligand contact to Zn(2+). [4Fe-4S] cluster is bound by residues Cys408, Cys411, and Cys415.

It belongs to the ThiC family. The cofactor is [4Fe-4S] cluster.

It catalyses the reaction 5-amino-1-(5-phospho-beta-D-ribosyl)imidazole + S-adenosyl-L-methionine = 4-amino-2-methyl-5-(phosphooxymethyl)pyrimidine + CO + 5'-deoxyadenosine + formate + L-methionine + 3 H(+). Its pathway is cofactor biosynthesis; thiamine diphosphate biosynthesis. Catalyzes the synthesis of the hydroxymethylpyrimidine phosphate (HMP-P) moiety of thiamine from aminoimidazole ribotide (AIR) in a radical S-adenosyl-L-methionine (SAM)-dependent reaction. The protein is Phosphomethylpyrimidine synthase of Saccharolobus islandicus (strain M.16.27) (Sulfolobus islandicus).